The primary structure comprises 287 residues: ATP synthase gamma chain (287 aa).

This sequence belongs to the ATPase gamma chain family. F-type ATPases have 2 components, CF(1) - the catalytic core - and CF(0) - the membrane proton channel. CF(1) has five subunits: alpha(3), beta(3), gamma(1), delta(1), epsilon(1). CF(0) has three main subunits: a, b and c.

It is found in the cell inner membrane. Functionally, produces ATP from ADP in the presence of a proton gradient across the membrane. The gamma chain is believed to be important in regulating ATPase activity and the flow of protons through the CF(0) complex. This Salmonella gallinarum (strain 287/91 / NCTC 13346) protein is ATP synthase gamma chain.